The sequence spans 264 residues: 3-methyl-2-oxobutanoate hydroxymethyltransferase (264 aa).

Positions 45 and 84 each coordinate Mg(2+). 3-methyl-2-oxobutanoate is bound by residues 45 to 46 (DS), Asp84, and Lys112. Glu114 contributes to the Mg(2+) binding site. Glu181 functions as the Proton acceptor in the catalytic mechanism.

Belongs to the PanB family. In terms of assembly, homodecamer; pentamer of dimers. It depends on Mg(2+) as a cofactor.

It is found in the cytoplasm. The catalysed reaction is 3-methyl-2-oxobutanoate + (6R)-5,10-methylene-5,6,7,8-tetrahydrofolate + H2O = 2-dehydropantoate + (6S)-5,6,7,8-tetrahydrofolate. The protein operates within cofactor biosynthesis; (R)-pantothenate biosynthesis; (R)-pantoate from 3-methyl-2-oxobutanoate: step 1/2. Its function is as follows. Catalyzes the reversible reaction in which hydroxymethyl group from 5,10-methylenetetrahydrofolate is transferred onto alpha-ketoisovalerate to form ketopantoate. This Vibrio cholerae serotype O1 (strain ATCC 39541 / Classical Ogawa 395 / O395) protein is 3-methyl-2-oxobutanoate hydroxymethyltransferase.